Here is a 287-residue protein sequence, read N- to C-terminus: uncharacterized protein (287 aa).

This is an uncharacterized protein from Methanocaldococcus jannaschii (strain ATCC 43067 / DSM 2661 / JAL-1 / JCM 10045 / NBRC 100440) (Methanococcus jannaschii).